A 974-amino-acid chain; its full sequence is Glycine dehydrogenase (decarboxylating) (974 aa).

At Lys720 the chain carries N6-(pyridoxal phosphate)lysine.

This sequence belongs to the GcvP family. As to quaternary structure, the glycine cleavage system is composed of four proteins: P, T, L and H. The cofactor is pyridoxal 5'-phosphate.

The enzyme catalyses N(6)-[(R)-lipoyl]-L-lysyl-[glycine-cleavage complex H protein] + glycine + H(+) = N(6)-[(R)-S(8)-aminomethyldihydrolipoyl]-L-lysyl-[glycine-cleavage complex H protein] + CO2. The glycine cleavage system catalyzes the degradation of glycine. The P protein binds the alpha-amino group of glycine through its pyridoxal phosphate cofactor; CO(2) is released and the remaining methylamine moiety is then transferred to the lipoamide cofactor of the H protein. The protein is Glycine dehydrogenase (decarboxylating) of Cupriavidus metallidurans (strain ATCC 43123 / DSM 2839 / NBRC 102507 / CH34) (Ralstonia metallidurans).